Here is a 408-residue protein sequence, read N- to C-terminus: 2-acyl-4-prenylphloroglucinol 6-prenyltransferase, chloroplastic (408 aa).

The N-terminal 46 residues, 1–46 (MELSSACNLSLKPNYYYYPTSLFPSNNSYNNLKASSYYQTQRPIKC), are a transit peptide targeting the chloroplast. 9 consecutive transmembrane segments (helical) span residues 119–139 (PIPF…ELLK), 146–166 (WQLM…HIYI), 193–213 (SVKS…LLMI), 217–237 (CGLF…MYSV), 257–277 (IGIG…GLPF), 281–301 (PPFT…SILK), 326–346 (IVLV…GVAI), 355–375 (YIMI…TWLL), and 388–408 (YYHF…FIST).

The protein belongs to the UbiA prenyltransferase family. In terms of assembly, homo- and heteromer. Interacts with PT1L, forming a functional metabolon. It depends on Mg(2+) as a cofactor. Expressed in trichomes.

The protein localises to the plastid. It is found in the chloroplast membrane. It catalyses the reaction a 2-acyl-4-prenylphloroglucinol + dimethylallyl diphosphate = a 2-acyl-4,6-diprenylphloroglucinol + diphosphate. It carries out the reaction a 2-acyl-4,6-diprenylphloroglucinol + dimethylallyl diphosphate = a 2-acyl-4,6,6-triprenylphloroglucinol + diphosphate. Its pathway is secondary metabolite biosynthesis. In terms of biological role, involved in the biosynthesis of prenylated phenolics natural products which contribute to the bitter taste of beer and display broad biological activities. Catalyzes the two last prenylation steps in the beta-bitter acid pathway. Uses dimethylallyl diphosphate (DMAPP) as the prenyl donor. This is 2-acyl-4-prenylphloroglucinol 6-prenyltransferase, chloroplastic from Humulus lupulus (European hop).